The chain runs to 89 residues: Probable Fe(2+)-trafficking protein (89 aa).

Belongs to the Fe(2+)-trafficking protein family.

Functionally, could be a mediator in iron transactions between iron acquisition and iron-requiring processes, such as synthesis and/or repair of Fe-S clusters in biosynthetic enzymes. This Legionella pneumophila (strain Lens) protein is Probable Fe(2+)-trafficking protein.